The following is a 159-amino-acid chain: MSYNINTPSQFVFLSSAWADPIELINLCTNALGNQFQTQQARTVVQRQFSEVWKPSPQVTVRFPDSDFKVYRFNAVLDPLVTALLGAFDTRNRIIEVENQANPSTAETLDATRRVDDATVAIRSAINNLIVELTRGTGSYNRSSFESSSGLVWTSSPAT.

S2 is subject to N-acetylserine; by host.

It belongs to the virgaviridae capsid protein family.

It is found in the virion. Capsid protein self-assembles to form rod-shaped virions about 18 nm in diameter with a central canal enclosing the viral genomic RNA. This chain is Capsid protein (CP), found in Tobacco mosaic virus (strain Rakkyo) (TMV-R).